The chain runs to 328 residues: MQGSVIEFLKPNLVGIEQINATRAKVTLGPLERGFGHTLGNALRRILLSSMPGTAVTEVEIDGVQHEYSTKEGVQEDILEILLNLKGLAVKLEGKDNVLVSLTKSGAGPVTAGDITHGSDVEIVNPEHVICHLTGNAEISMRIKIESGRGYVPASSRIHTEEDERPIGRLLVDATFSPVERIAYSVESARVEQRTDLDKLVIDMETDGTLDPEEAIRRAATILAEQLDAFVDLRKVSEPVAKEEKPEFDPILLRPVDDLELTVRSANCLKAETIHYIGDLVQRTEVELLKTPNLGKKSLTEIKDVLASRGLSLGMRLENWPPASLSED.

The segment at 1–234 (MQGSVIEFLK…EQLDAFVDLR (234 aa)) is alpha N-terminal domain (alpha-NTD). An alpha C-terminal domain (alpha-CTD) region spans residues 248 to 328 (FDPILLRPVD…NWPPASLSED (81 aa)).

The protein belongs to the RNA polymerase alpha chain family. As to quaternary structure, homodimer. The RNAP catalytic core consists of 2 alpha, 1 beta, 1 beta' and 1 omega subunit. When a sigma factor is associated with the core the holoenzyme is formed, which can initiate transcription.

It catalyses the reaction RNA(n) + a ribonucleoside 5'-triphosphate = RNA(n+1) + diphosphate. Functionally, DNA-dependent RNA polymerase catalyzes the transcription of DNA into RNA using the four ribonucleoside triphosphates as substrates. The protein is DNA-directed RNA polymerase subunit alpha 2 of Psychromonas ingrahamii (strain DSM 17664 / CCUG 51855 / 37).